The chain runs to 123 residues: Large ribosomal subunit protein uL18 (123 aa).

The protein belongs to the universal ribosomal protein uL18 family. As to quaternary structure, part of the 50S ribosomal subunit; part of the 5S rRNA/L5/L18/L25 subcomplex. Contacts the 5S and 23S rRNAs.

Functionally, this is one of the proteins that bind and probably mediate the attachment of the 5S RNA into the large ribosomal subunit, where it forms part of the central protuberance. The polypeptide is Large ribosomal subunit protein uL18 (Chlamydia trachomatis serovar A (strain ATCC VR-571B / DSM 19440 / HAR-13)).